The primary structure comprises 336 residues: NmrA-like family domain-containing oxidoreductase FrzB (336 aa).

K135 lines the NADP(+) pocket.

It belongs to the NmrA-type oxidoreductase family.

The catalysed reaction is 4-{[(2S,5S)-5-[(4-hydroxyphenyl)methyl]-2,5-dihydropyrazin-2-yl]methyl}phenol + 2 NADPH + 2 H(+) = (S,S)-2,5-di-(p-hydroxybenzyl)piperazine + 2 NADP(+). Its pathway is secondary metabolite biosynthesis. Functionally, nmrA-like family domain-containing oxidoreductase; part of the gene cluster that mediates the biosynthesis of the alkaloid (-)-FR901483, a potent immunosuppressant that shows efficacy in animal models and a probable inhibitor of purine nucleotide biosynthesis by targeting phosphoribosylpyrophosphate amidotransferase (PPAT). Within the pathway, FrzB catalyzes the reduction of 4-{[(2S,5S)-5-[(4-hydroxyphenyl)methyl]-2,5-dihydropyrazin-2-yl]methyl}phenol to produce the (S,S)-dityrosyl-piperazine intermediate. The biosynthesis of (-)-FR901483 starts with the condensation of two L-tyrosines to yield (S,S)-dityrosyl-piperazine. This process occurs in 3 steps with the non-canonical nonribosomal peptide synthetase FrzA catalyzing the reduction of L-tyrosine into L-tyrosinal, the spontaneous condensation of 2 L-tyrosinal units, and the subsequent reduction by the NmrA-like family domain-containing oxidoreductase FrzB. The cytochrome P450 monooxygenase FrzC then performs coupling between N10 and C1' to morph the piperazine into a 1,4-diazabicyclo[3.2.1]octane spiro-fused to a 2,5-cyclohexadienone. The dienone portion is further reduced to cyclohexanone by the flavin-dependent reductase FrzD. The methyltranserases (MTs) FrzE and FrzF are then involved in the methylation at the C10' amine and the C4 phenolic oxygen, respectively. The order of the two MTs appear to be interchangeable. Cleavage of the C9-N10' bond by the dioxygenase FrzG then leads to formation of a conjugated iminium. In addition to the oxidation of C9, an additional dehydrogenation between C7 and C8 can occur to give a likely shunt product. The next biosynthetic step is the intramolecular aldol condensation catalyzed by the newly identified aldolase FrzH to yield an aza-tricyclic product with the formation of a C9-C3' bond. The short-chain dehydrogenase/reductase FrzI then produces dephospho-(-)-FR901483 that is phosphorylated at C4'-OH into (-)-FR901483 by the phosphotransferase FrzJ. This chain is NmrA-like family domain-containing oxidoreductase FrzB, found in Cladobotryum sp.